Here is a 170-residue protein sequence, read N- to C-terminus: Alpha-crystallin A chain (170 aa).

M1 bears the N-acetylmethionine mark. The segment at 1-63 (MDVTIQHPWF…RTVLDSGISE (63 aa)) is required for complex formation with BFSP1 and BFSP2. Q6 is modified (deamidated glutamine; partial). S45 is modified (phosphoserine). Q50 bears the Deamidated glutamine; partial mark. One can recognise a sHSP domain in the interval 52 to 161 (LFRTVLDSGI…SERTIPVSRE (110 aa)). K70 and K99 each carry N6-acetyllysine. Residue H100 coordinates Zn(2+). N101 bears the Deamidated asparagine; partial mark. Residues E102, H107, and H151 each contribute to the Zn(2+) site. The interval 144–170 (PKIVDPSHSERTIPVSREEKPSSAPSS) is disordered. Residues 148–164 (DPSHSERTIPVSREEKP) show a composition bias toward basic and acidic residues. S159 carries an O-linked (GlcNAc) serine glycan.

This sequence belongs to the small heat shock protein (HSP20) family. Heteromer composed of three CRYAA and one CRYAB subunits. Inter-subunit bridging via zinc ions enhances stability, which is crucial as there is no protein turn over in the lens. Can also form homodimers and homotetramers (dimers of dimers) which serve as the building blocks of homooligomers. Within homooligomers, the zinc-binding motif is created from residues of 3 different molecules. His-100 and Glu-102 from one molecule are ligands of the zinc ion, and His-107 and His-151 residues from additional molecules complete the site with tetrahedral coordination geometry. Part of a complex required for lens intermediate filament formation composed of BFSP1, BFSP2 and CRYAA. Acetylation at Lys-70 may increase chaperone activity. Post-translationally, undergoes age-dependent proteolytical cleavage at the C-terminus.

It is found in the cytoplasm. The protein localises to the nucleus. Its function is as follows. Contributes to the transparency and refractive index of the lens. Acts as a chaperone, preventing aggregation of various proteins under a wide range of stress conditions. Required for the correct formation of lens intermediate filaments as part of a complex composed of BFSP1, BFSP2 and CRYAA. This Choloepus hoffmanni (Hoffmann's two-fingered sloth) protein is Alpha-crystallin A chain (CRYAA).